Consider the following 541-residue polypeptide: Membrane protein insertase YidC (541 aa).

The next 5 helical transmembrane spans lie at 6–26 (NILL…WQAD), 349–369 (FVGN…GLLF), 420–440 (GGCL…WVLL), 457–477 (LSVQ…MFVM), and 500–520 (VIFT…WLVG).

The protein belongs to the OXA1/ALB3/YidC family. Type 1 subfamily. Interacts with the Sec translocase complex via SecD. Specifically interacts with transmembrane segments of nascent integral membrane proteins during membrane integration.

The protein resides in the cell inner membrane. Its function is as follows. Required for the insertion and/or proper folding and/or complex formation of integral membrane proteins into the membrane. Involved in integration of membrane proteins that insert both dependently and independently of the Sec translocase complex, as well as at least some lipoproteins. Aids folding of multispanning membrane proteins. The protein is Membrane protein insertase YidC of Shewanella sp. (strain MR-7).